Reading from the N-terminus, the 541-residue chain is MAKSLLFGEQARRSMEAGVDKLADTVRVTLGPKGRNVVLDKKFGSPLITNDGVTIAREIELEDPYENMGAQLVKEVATKTNDVAGDGTTTATLLAQAIIREGLKNVTAGANPIQIRTGIRKAVEKAVEEIKVISKPVNGKEDIARVAAISAASEEVGKLIADAMERVGNDGVITVEESKSMGTDLEVVEGMQFDRGYVSAYMVTDTEKMEAVLDDVYILITDKKISNIQEILPILEQIVQQGKKLLIISEDIEGEALSTLVLNKLRGTFTCVGVKAPGFGDRRKEMLQDIAILTGGEVISEELGRDLKDVTIDMLGTADSVKVTKENTTIVNGKGDKVAIKERVSQIRVQIEDTTSEFDKEKLQERLAKLAGGVAVIRVGAATETELKEEKLRIEDALAATKAAVEEGIVPGGGTAYIDIIPKIADLTSDIIDVKLGIDIIRKALEEPVRQIANNAGAEGSVIIEKVKASEAGVGYDALNDKYVDMLKTGIVDPTKVTRSALQNAASIASTFLTTEAAVADIPEKENTPPMAPGMGMDGMY.

Residues 29-32 (TLGP), 86-90 (DGTTT), Gly-413, 477-479 (DAL), and Asp-493 each bind ATP.

It belongs to the chaperonin (HSP60) family. Forms a cylinder of 14 subunits composed of two heptameric rings stacked back-to-back. Interacts with the co-chaperonin GroES.

It is found in the cytoplasm. It catalyses the reaction ATP + H2O + a folded polypeptide = ADP + phosphate + an unfolded polypeptide.. Its function is as follows. Together with its co-chaperonin GroES, plays an essential role in assisting protein folding. The GroEL-GroES system forms a nano-cage that allows encapsulation of the non-native substrate proteins and provides a physical environment optimized to promote and accelerate protein folding. In Clostridium botulinum (strain Loch Maree / Type A3), this protein is Chaperonin GroEL.